A 382-amino-acid polypeptide reads, in one-letter code: Deoxyhypusine synthase (382 aa).

Residues 108 to 112 (SNLIS), 134 to 136 (TAG), glutamate 140, and aspartate 257 each bind NAD(+). A spermidine-binding site is contributed by 139–140 (EE). A spermidine-binding site is contributed by aspartate 262. Residue glycine 304 participates in NAD(+) binding. Histidine 309 is a binding site for spermidine. An NAD(+)-binding site is contributed by 329-330 (TG). Spermidine is bound by residues 335 to 337 (GSD) and 344 to 350 (EAVSWGK). The active-site Nucleophile is lysine 350. 363 to 364 (DV) serves as a coordination point for NAD(+).

It belongs to the deoxyhypusine synthase family. NAD(+) is required as a cofactor.

The catalysed reaction is [eIF5A protein]-L-lysine + spermidine = [eIF5A protein]-deoxyhypusine + propane-1,3-diamine. It participates in protein modification; eIF5A hypusination. Catalyzes the NAD-dependent oxidative cleavage of spermidine and the subsequent transfer of the butylamine moiety of spermidine to the epsilon-amino group of a specific lysine residue of the eIF-5A precursor protein to form the intermediate deoxyhypusine residue. This chain is Deoxyhypusine synthase (DYS1), found in Eremothecium gossypii (strain ATCC 10895 / CBS 109.51 / FGSC 9923 / NRRL Y-1056) (Yeast).